We begin with the raw amino-acid sequence, 690 residues long: Lipase 2 (690 aa).

The signal sequence occupies residues 1–37 (MLRGQEERKYSIRKYSIGVVSVLAATMFVVSSHEAQA). Positions 52–71 (LNQPGEQGNAITSHQMQSGK) are enriched in polar residues. Positions 52 to 266 (LNQPGEQGNA…KPTDKNTDNK (215 aa)) are disordered. Over residues 72 to 81 (QLDDMHKENG) the composition is skewed to basic and acidic residues. Polar residues-rich tracts occupy residues 82-114 (KSGT…NDNQ), 124-171 (SKQS…QPSI), and 185-206 (PTST…AQDA). 2 stretches are compositionally biased toward basic and acidic residues: residues 225–237 (IDAK…RQSE) and 257–266 (KPTDKNTDNK). Catalysis depends on charge relay system residues Ser412 and His645.

Belongs to the AB hydrolase superfamily. Lipase family.

It localises to the secreted. It catalyses the reaction a triacylglycerol + H2O = a diacylglycerol + a fatty acid + H(+). This chain is Lipase 2 (lip2), found in Staphylococcus aureus (strain NCTC 8325 / PS 47).